The following is a 666-amino-acid chain: Vicilin-like antimicrobial peptides 2-1 (666 aa).

The first 27 residues, 1–27 (MAINTSNLCSLLFLLSLFLLSTTVSLA), serve as a signal peptide directing secretion. Disordered stretches follow at residues 161–191 (QQKRYEEQQREDEEKYEERMKEEDNKRDPQQ) and 219–254 (QQRQHGRGGDMMNPQRGGSGRYEEGEEEQSDNPYYF). 2 Cupin type-1 domains span residues 271 to 410 (SVLE…EKLR) and 455 to 625 (YNLF…KEVE). A disordered region spans residues 629–655 (NSQDQSIFFPGPRQHQQQSPRSTKQQQ). Low complexity predominate over residues 642-655 (QHQQQSPRSTKQQQ).

It belongs to the 7S seed storage protein family.

Its subcellular location is the secreted. In terms of biological role, antimicrobial peptides 2b, 2c and 2d have antibacterial and antifungal activity against a range of species. This Macadamia integrifolia (Macadamia nut) protein is Vicilin-like antimicrobial peptides 2-1.